Reading from the N-terminus, the 179-residue chain is Large ribosomal subunit protein eL18 (179 aa).

This sequence belongs to the eukaryotic ribosomal protein eL18 family. Component of the large ribosomal subunit.

The protein localises to the cytoplasm. It is found in the cytosol. Its subcellular location is the rough endoplasmic reticulum. Functionally, component of the large ribosomal subunit. The ribosome is a large ribonucleoprotein complex responsible for the synthesis of proteins in the cell. This Salmo salar (Atlantic salmon) protein is Large ribosomal subunit protein eL18 (rpl18).